A 493-amino-acid chain; its full sequence is MSFKDLRSFIDHLETNGELKRISHPVDPHLEMTEIADRVLRAKGPALLFENPVGNDMPVLANLFGTPKRVAMALGKEDPIALRDVGELLAFLKEPEPPSGFKDAIAKIPMFKQALNMPPKTVRNPPCQQVVKTGEEVDLTKLPIQHCWPGDVAPLVTWGLTITKGPRQKRQNLGIYRQQLLGKDKLIMRWLDHRGGALDFKDFKEKHPGERYPVVVALGADPVTILGAVTPVPDAMSEYAFAGLLRGERTEVCKALSCDLEVPATSEIILEGYIDPEEMAEEGPYGDHTGYYNETDSFPVFTVTHMTHRKDAIYHSTYTGRPPDEPAMLGVALNEVFVPILRKQYPEIIDFYLPPEGCSYRMAVISIRKQYPGHAKRVMMGAWSFLRQFMYTKFIVVVDEDVNCRDWNDVIWAITTRMDPKRDTVMIENTPIDYLDFASPVAGLGSKMGMDATNKWQGETDREWGTPIVMDEAVKQKVDAIWNDLGIDDAPTL.

Asn172 contacts Mn(2+). Prenylated FMN-binding positions include 175–177, 189–191, and 194–195; these read IYR, RWL, and RG. Glu238 provides a ligand contact to Mn(2+). Catalysis depends on Asp287, which acts as the Proton donor.

This sequence belongs to the UbiD family. In terms of assembly, homohexamer. Requires prenylated FMN as cofactor. Mn(2+) serves as cofactor.

It is found in the cell membrane. It carries out the reaction a 4-hydroxy-3-(all-trans-polyprenyl)benzoate + H(+) = a 2-(all-trans-polyprenyl)phenol + CO2. It functions in the pathway cofactor biosynthesis; ubiquinone biosynthesis. In terms of biological role, catalyzes the decarboxylation of 3-octaprenyl-4-hydroxy benzoate to 2-octaprenylphenol, an intermediate step in ubiquinone biosynthesis. The polypeptide is 3-octaprenyl-4-hydroxybenzoate carboxy-lyase (Shewanella halifaxensis (strain HAW-EB4)).